The sequence spans 322 residues: Mas-related G-protein coupled receptor member X3 (322 aa).

The Extracellular portion of the chain corresponds to 1-31; sequence MDSTIPVLGTELTPINGREETPCYKQTLSFT. Residues 32-52 form a helical membrane-spanning segment; sequence GLTCIVSLVALTGNAVVLWLL. Topologically, residues 53 to 60 are cytoplasmic; it reads GCRMRRNA. Residues 61-81 form a helical membrane-spanning segment; it reads VSIYILNLVAADFLFLSGHII. Residues 82–96 lie on the Extracellular side of the membrane; it reads CSPLRLINIRHPISK. The chain crosses the membrane as a helical span at residues 97 to 117; it reads ILSPVMTFPYFIGLSMLSAIS. Over 118–140 the chain is Cytoplasmic; it reads TERCLSILWPIWYHCRRPRYLSS. The helical transmembrane segment at 141–161 threads the bilayer; that stretch reads VMCVLLWALSLLRSILEWMFC. The Extracellular portion of the chain corresponds to 162 to 177; it reads DFLFSGANSVWCETSD. Residues 178–198 traverse the membrane as a helical segment; sequence FITIAWLVFLCVVLCGSSLVL. Residues 199-213 are Cytoplasmic-facing; sequence LVRILCGSRKMPLTR. A helical transmembrane segment spans residues 214-234; it reads LYVTILLTVLVFLLCGLPFGI. Topologically, residues 235 to 254 are extracellular; the sequence is QWALFSRIHLDWKVLFCHVH. The chain crosses the membrane as a helical span at residues 255-275; the sequence is LVSIFLSALNSSANPIIYFFV. Topologically, residues 276–322 are cytoplasmic; sequence GSFRQRQNRQNLKLVLQRALQDTPEVDEGGGWLPQETLELSGSRLEQ.

The protein belongs to the G-protein coupled receptor 1 family. Mas subfamily. Uniquely localized in a subset of small dorsal root and trigeminal sensory neurons.

The protein resides in the cell membrane. Its function is as follows. Orphan receptor. Probably involved in the function of nociceptive neurons. May regulate nociceptor function and/or development, including the sensation or modulation of pain. Potently activated by enkephalins. This chain is Mas-related G-protein coupled receptor member X3 (MRGPRX3), found in Homo sapiens (Human).